Reading from the N-terminus, the 512-residue chain is ATP synthase subunit alpha (512 aa).

169-176 (GDRQTGKT) is a binding site for ATP.

Belongs to the ATPase alpha/beta chains family. F-type ATPases have 2 components, CF(1) - the catalytic core - and CF(0) - the membrane proton channel. CF(1) has five subunits: alpha(3), beta(3), gamma(1), delta(1), epsilon(1). CF(0) has three main subunits: a(1), b(2) and c(9-12). The alpha and beta chains form an alternating ring which encloses part of the gamma chain. CF(1) is attached to CF(0) by a central stalk formed by the gamma and epsilon chains, while a peripheral stalk is formed by the delta and b chains.

Its subcellular location is the cell inner membrane. It carries out the reaction ATP + H2O + 4 H(+)(in) = ADP + phosphate + 5 H(+)(out). Its function is as follows. Produces ATP from ADP in the presence of a proton gradient across the membrane. The alpha chain is a regulatory subunit. The sequence is that of ATP synthase subunit alpha from Rickettsia akari (strain Hartford).